Here is a 216-residue protein sequence, read N- to C-terminus: Pyridoxine/pyridoxamine 5'-phosphate oxidase (216 aa).

Substrate-binding positions include 12-15 (RKSY) and K70. FMN contacts are provided by residues 65–70 (RVVLVK), 80–81 (FT), R86, and K87. 3 residues coordinate substrate: Y127, R131, and S135. Residues 144 to 145 (QS) and W188 each bind FMN. 194–196 (RLH) contacts substrate. Position 198 (R198) interacts with FMN.

Belongs to the pyridoxamine 5'-phosphate oxidase family. As to quaternary structure, homodimer. The cofactor is FMN.

It carries out the reaction pyridoxamine 5'-phosphate + O2 + H2O = pyridoxal 5'-phosphate + H2O2 + NH4(+). The enzyme catalyses pyridoxine 5'-phosphate + O2 = pyridoxal 5'-phosphate + H2O2. Its pathway is cofactor metabolism; pyridoxal 5'-phosphate salvage; pyridoxal 5'-phosphate from pyridoxamine 5'-phosphate: step 1/1. It participates in cofactor metabolism; pyridoxal 5'-phosphate salvage; pyridoxal 5'-phosphate from pyridoxine 5'-phosphate: step 1/1. Catalyzes the oxidation of either pyridoxine 5'-phosphate (PNP) or pyridoxamine 5'-phosphate (PMP) into pyridoxal 5'-phosphate (PLP). The protein is Pyridoxine/pyridoxamine 5'-phosphate oxidase of Polaromonas sp. (strain JS666 / ATCC BAA-500).